The sequence spans 211 residues: Lysozyme g (211 aa).

Residues 1–26 form the signal peptide; sequence MLGKNDPMCLVLVLLGLTALLGICQG. 2 disulfide bridges follow: C30–C86 and C44–C55. Residues E99 and D112 contribute to the active site.

The protein belongs to the glycosyl hydrolase 23 family. As to expression, granulocyte compartment of myelomonocytic cells.

It is found in the secreted. It carries out the reaction Hydrolysis of (1-&gt;4)-beta-linkages between N-acetylmuramic acid and N-acetyl-D-glucosamine residues in a peptidoglycan and between N-acetyl-D-glucosamine residues in chitodextrins.. This is Lysozyme g from Gallus gallus (Chicken).